The sequence spans 450 residues: Tubulin alpha chain (450 aa).

Glutamine 11 is a GTP binding site. The residue at position 40 (lysine 40) is an N6-acetyllysine. GTP contacts are provided by glutamate 71, serine 140, glycine 144, threonine 145, threonine 179, asparagine 206, and asparagine 228. Residue glutamate 71 coordinates Mg(2+). Glutamate 254 is an active-site residue. The interval 431–450 (DYEEVGTDSVGEEDEEGEEY) is disordered.

This sequence belongs to the tubulin family. As to quaternary structure, dimer of alpha and beta chains. A typical microtubule is a hollow water-filled tube with an outer diameter of 25 nm and an inner diameter of 15 nM. Alpha-beta heterodimers associate head-to-tail to form protofilaments running lengthwise along the microtubule wall with the beta-tubulin subunit facing the microtubule plus end conferring a structural polarity. Microtubules usually have 13 protofilaments but different protofilament numbers can be found in some organisms and specialized cells. Mg(2+) serves as cofactor. Post-translationally, some glutamate residues at the C-terminus are polyglycylated, resulting in polyglycine chains on the gamma-carboxyl group. Glycylation is mainly limited to tubulin incorporated into axonemes (cilia and flagella) whereas glutamylation is prevalent in neuronal cells, centrioles, axonemes, and the mitotic spindle. Both modifications can coexist on the same protein on adjacent residues, and lowering polyglycylation levels increases polyglutamylation, and reciprocally. The precise function of polyglycylation is still unclear. In terms of processing, some glutamate residues at the C-terminus are polyglutamylated, resulting in polyglutamate chains on the gamma-carboxyl group. Polyglutamylation plays a key role in microtubule severing by spastin (SPAST). SPAST preferentially recognizes and acts on microtubules decorated with short polyglutamate tails: severing activity by SPAST increases as the number of glutamates per tubulin rises from one to eight, but decreases beyond this glutamylation threshold. Acetylation of alpha chains at Lys-40 is located inside the microtubule lumen. This modification has been correlated with increased microtubule stability, intracellular transport and ciliary assembly. Post-translationally, undergoes a tyrosination/detyrosination cycle, the cyclic removal and re-addition of a C-terminal tyrosine residue by the enzymes tubulin tyrosine carboxypeptidase (MATCAP, VASH1 or VASH2) and tubulin tyrosine ligase (TTL), respectively. In terms of processing, tyrosination promotes microtubule interaction with CAP-Gly microtubule plus-end tracking proteins. Tyrosinated tubulins regulate the initiation of dynein-driven motility. Detyrosination is involved in metaphase plate congression by guiding chromosomes during mitosis. Detyrosination increases microtubules-dependent mechanotransduction in dystrophic cardiac and skeletal muscle. In cardiomyocytes, detyrosinated microtubules are required to resist to contractile compression during contraction.

It is found in the cytoplasm. The protein localises to the cytoskeleton. The catalysed reaction is GTP + H2O = GDP + phosphate + H(+). Tubulin is the major constituent of microtubules, a cylinder consisting of laterally associated linear protofilaments composed of alpha- and beta-tubulin heterodimers. Microtubules grow by the addition of GTP-tubulin dimers to the microtubule end, where a stabilizing cap forms. Below the cap, tubulin dimers are in GDP-bound state, owing to GTPase activity of alpha-tubulin. The chain is Tubulin alpha chain from Oncorhynchus keta (Chum salmon).